Here is a 143-residue protein sequence, read N- to C-terminus: Small ribosomal subunit protein uS12 (143 aa).

Pro62 bears the Hydroxyproline mark.

This sequence belongs to the universal ribosomal protein uS12 family. Component of the 40S small ribosomal subunit.

Its subcellular location is the cytoplasm. The protein localises to the cytosol. It localises to the rough endoplasmic reticulum. The sequence is that of Small ribosomal subunit protein uS12 (rps-23) from Caenorhabditis elegans.